A 148-amino-acid chain; its full sequence is Probable 4-amino-4-deoxy-L-arabinose-phosphoundecaprenol flippase subunit ArnF (148 aa).

The Cytoplasmic portion of the chain corresponds to 1–23 (MRGDNTGVGKEPAVTERPAIKGY). The chain crosses the membrane as a helical span at residues 24–44 (LYVLGSILLVTLAQLAMKWGV). Over 45-63 (MQLPAWQASLDIMLAHPVP) the chain is Periplasmic. The chain crosses the membrane as a helical span at residues 64 to 84 (LLVITAGVGCYALSLLCWLAA). At 85–91 (LHFTPLN) the chain is on the cytoplasmic side. The chain crosses the membrane as a helical span at residues 92–112 (IAYPLLSTSYALVYLLAVSIP). At 113-117 (SFAEP) the chain is on the periplasmic side. A helical transmembrane segment spans residues 118–138 (LEPGKAVGVIFILLGAVLVGI). Residues 139–148 (KPVGRKRNAH) are Cytoplasmic-facing.

The protein belongs to the ArnF family. In terms of assembly, heterodimer of ArnE and ArnF.

It is found in the cell inner membrane. Its pathway is bacterial outer membrane biogenesis; lipopolysaccharide biosynthesis. In terms of biological role, translocates 4-amino-4-deoxy-L-arabinose-phosphoundecaprenol (alpha-L-Ara4N-phosphoundecaprenol) from the cytoplasmic to the periplasmic side of the inner membrane. This Aeromonas salmonicida (strain A449) protein is Probable 4-amino-4-deoxy-L-arabinose-phosphoundecaprenol flippase subunit ArnF.